The sequence spans 215 residues: uncharacterized protein (215 aa).

A run of 5 helical transmembrane segments spans residues 1 to 21 (MTAE…AIGM), 36 to 56 (VLIG…FADV), 67 to 87 (SRIA…NILV), 92 to 112 (IVGL…MVIG), and 118 to 138 (LGIY…QLTF).

The protein belongs to the MgtC/SapB family.

It localises to the cell inner membrane. This is an uncharacterized protein from Escherichia coli O157:H7.